A 953-amino-acid chain; its full sequence is Coatomer subunit beta-1 (953 aa).

5 HEAT repeats span residues 49 to 87 (ETLPHLFITVVRYVLPSEDHTIQKLLLLYLEIVDKRDVA), 93 to 127 (PEMILICQNLRNNLQHPNEYIRGVTLRFLCRLNEP), 128 to 165 (ELLEPLIPSILANLDHRHHFIRRHALSAISAIYRLPHG), 314 to 351 (DVMVDVVMDVLRALSSPNVDVRRKVLDLVLDLLTPRNV), and 393 to 430 (EVAGSVVHLLMDFLGDTNVAAAVDVVLFVREIIETNPK).

In terms of assembly, oligomeric complex that consists of at least the alpha, beta, beta', gamma, delta, epsilon and zeta subunits.

It localises to the cytoplasm. It is found in the golgi apparatus membrane. Its subcellular location is the cytoplasmic vesicle. The protein localises to the COPI-coated vesicle membrane. Functionally, the coatomer is a cytosolic protein complex that binds to dilysine motifs and reversibly associates with Golgi non-clathrin-coated vesicles, which further mediate biosynthetic protein transport from the ER, via the Golgi up to the trans Golgi network. Coatomer complex is required for budding from Golgi membranes, and is essential for the retrograde Golgi-to-ER transport of dilysine-tagged proteins. The sequence is that of Coatomer subunit beta-1 from Oryza sativa subsp. japonica (Rice).